Here is a 249-residue protein sequence, read N- to C-terminus: tRNA (guanine-N(1)-)-methyltransferase (249 aa).

S-adenosyl-L-methionine is bound by residues Gly112 and 132-137 (LGDFVL).

This sequence belongs to the RNA methyltransferase TrmD family. In terms of assembly, homodimer.

The protein resides in the cytoplasm. It catalyses the reaction guanosine(37) in tRNA + S-adenosyl-L-methionine = N(1)-methylguanosine(37) in tRNA + S-adenosyl-L-homocysteine + H(+). Its function is as follows. Specifically methylates guanosine-37 in various tRNAs. This is tRNA (guanine-N(1)-)-methyltransferase from Geobacter sp. (strain M21).